Here is a 255-residue protein sequence, read N- to C-terminus: Chlorocatechol 1,2-dioxygenase (255 aa).

Fe cation-binding residues include Y130, Y164, H188, and H190.

It belongs to the intradiol ring-cleavage dioxygenase family. Fe(3+) is required as a cofactor.

The enzyme catalyses 3,5-dichlorocatechol + O2 = (2E,4E)-2,4-dichloromuconate + 2 H(+). It participates in aromatic compound metabolism; 3-chlorocatechol degradation. Preferentially converts 3,5-dichlorocatechol as opposed to other chlorinated catechols. Retains diminished activity toward non-chlorinated substrates. This Burkholderia cepacia (Pseudomonas cepacia) protein is Chlorocatechol 1,2-dioxygenase (tfdC).